Consider the following 160-residue polypeptide: uncharacterized protein (160 aa).

Positions 1-29 (MCGLGIVPMVKPALFGMLILVIGTSTVQA) are cleaved as a signal peptide.

This is an uncharacterized protein from Sinorhizobium fredii (strain NBRC 101917 / NGR234).